The chain runs to 137 residues: Protein MGF 110-7L (137 aa).

The signal sequence occupies residues 1-20; it reads MLVIILGIIGLLASSNLVSS. 3 N-linked (GlcNAc...) asparagine; by host glycosylation sites follow: N69, N70, and N105.

The protein belongs to the asfivirus MGF 110 family.

Its function is as follows. Plays a role in virus cell tropism, and may be required for efficient virus replication in macrophages. The polypeptide is Protein MGF 110-7L (African swine fever virus (isolate Warthog/Namibia/Wart80/1980) (ASFV)).